A 964-amino-acid polypeptide reads, in one-letter code: Isoleucine--tRNA ligase (964 aa).

The 'HIGH' region motif lies at 66-76 (PYANGDIHIGH). L-isoleucyl-5'-AMP is bound at residue E596. The 'KMSKS' region signature appears at 637–641 (KMSKS). K640 serves as a coordination point for ATP. Zn(2+)-binding residues include C927, C930, C947, and C950.

Belongs to the class-I aminoacyl-tRNA synthetase family. IleS type 1 subfamily. In terms of assembly, monomer. Zn(2+) serves as cofactor.

It localises to the cytoplasm. It catalyses the reaction tRNA(Ile) + L-isoleucine + ATP = L-isoleucyl-tRNA(Ile) + AMP + diphosphate. In terms of biological role, catalyzes the attachment of isoleucine to tRNA(Ile). As IleRS can inadvertently accommodate and process structurally similar amino acids such as valine, to avoid such errors it has two additional distinct tRNA(Ile)-dependent editing activities. One activity is designated as 'pretransfer' editing and involves the hydrolysis of activated Val-AMP. The other activity is designated 'posttransfer' editing and involves deacylation of mischarged Val-tRNA(Ile). This chain is Isoleucine--tRNA ligase, found in Cupriavidus necator (strain ATCC 17699 / DSM 428 / KCTC 22496 / NCIMB 10442 / H16 / Stanier 337) (Ralstonia eutropha).